Consider the following 510-residue polypeptide: Photosystem II CP47 reaction center protein (510 aa).

Over 2-16 (GLPWYRVHTVLINDP) the chain is Cytoplasmic. A helical transmembrane segment spans residues 17 to 37 (GRLIAAHLMHTALVAGWAGSM). Topologically, residues 38–94 (ALYELATFDPSDPVLNPMWRQGMFVLPFMARLGVTGSWSGWSITGETGIDPGFWSFE) are lumenal. Residues 95 to 116 (GVALAHIVLSGLLFLAACWHWV) traverse the membrane as a helical segment. Over 117–134 (YWDLELFRDPRTGEPALD) the chain is Cytoplasmic. The helical transmembrane segment at 135 to 157 (LPKMFGIHLFLAGLLCFGFGAFH) threads the bilayer. The Lumenal segment spans residues 158 to 196 (LTGLFGPGMWVSDPYGLTGSVQPVAPEWGPDGFNPYNPG). The helical transmembrane segment at 197–218 (GVVAHHIAAGIVGIIAGLFHIL) threads the bilayer. The Cytoplasmic portion of the chain corresponds to 219-233 (VRPPQRLYKALRMGN). A helical transmembrane segment spans residues 234–254 (IETVLSSSIAAVFFAAFVVAG). The Lumenal portion of the chain corresponds to 255 to 450 (TMWYGSATTP…GIFRTSPRGW (196 aa)). Residues 451–473 (FTFAHAVFALLFFFGHIWHGART) traverse the membrane as a helical segment. The Cytoplasmic portion of the chain corresponds to 474–510 (LFRDVFSGIDPELSPEQVEWGFYQKVGDVTTRRKEAV).

In terms of assembly, PSII is composed of 1 copy each of membrane proteins PsbA, PsbB, PsbC, PsbD, PsbE, PsbF, PsbH, PsbI, PsbJ, PsbK, PsbL, PsbM, PsbT, PsbX, PsbY, PsbZ, Psb30/Ycf12, peripheral proteins PsbO, CyanoQ (PsbQ), PsbU, PsbV and a large number of cofactors. It forms dimeric complexes. Part of a photosystem II (PSII) assembly intermediate complex PSII-I; crystallized from a strain deleted of psbJ, it forms monomeric PSII before addition of the oxygen evolving complex. PSII-I includes 3 assembly factors not found in mature PSII (Psb27, Psb28 and Psb34). The cofactor is Binds multiple chlorophylls. PSII binds additional chlorophylls, carotenoids and specific lipids..

Its subcellular location is the cellular thylakoid membrane. In terms of biological role, one of the components of the core complex of photosystem II (PSII). It binds chlorophyll and helps catalyze the primary light-induced photochemical processes of PSII. PSII is a light-driven water:plastoquinone oxidoreductase, using light energy to abstract electrons from H(2)O, generating O(2) and a proton gradient subsequently used for ATP formation. In Thermosynechococcus vestitus (strain NIES-2133 / IAM M-273 / BP-1), this protein is Photosystem II CP47 reaction center protein.